We begin with the raw amino-acid sequence, 217 residues long: Large ribosomal subunit protein uL3 (217 aa).

An N5-methylglutamine modification is found at Gln-154.

The protein belongs to the universal ribosomal protein uL3 family. Part of the 50S ribosomal subunit. Forms a cluster with proteins L14 and L19. In terms of processing, methylated by PrmB.

Its function is as follows. One of the primary rRNA binding proteins, it binds directly near the 3'-end of the 23S rRNA, where it nucleates assembly of the 50S subunit. In Burkholderia ambifaria (strain ATCC BAA-244 / DSM 16087 / CCUG 44356 / LMG 19182 / AMMD) (Burkholderia cepacia (strain AMMD)), this protein is Large ribosomal subunit protein uL3.